The sequence spans 140 residues: Large-conductance mechanosensitive channel (140 aa).

Helical transmembrane passes span 14-34 (VMDLAVGVIIGGAFATITGSL) and 85-105 (GAFVTAVINFLILAFIIFLLV).

The protein belongs to the MscL family. Homopentamer.

It is found in the cell inner membrane. Channel that opens in response to stretch forces in the membrane lipid bilayer. May participate in the regulation of osmotic pressure changes within the cell. The sequence is that of Large-conductance mechanosensitive channel from Sphingopyxis alaskensis (strain DSM 13593 / LMG 18877 / RB2256) (Sphingomonas alaskensis).